The following is a 475-amino-acid chain: ATP synthase subunit beta, chloroplastic (475 aa).

Glycine 156–threonine 163 contacts ATP.

This sequence belongs to the ATPase alpha/beta chains family. F-type ATPases have 2 components, CF(1) - the catalytic core - and CF(0) - the membrane proton channel. CF(1) has five subunits: alpha(3), beta(3), gamma(1), delta(1), epsilon(1). CF(0) has four main subunits: a(1), b(1), b'(1) and c(9-12).

It is found in the plastid. The protein resides in the chloroplast thylakoid membrane. It catalyses the reaction ATP + H2O + 4 H(+)(in) = ADP + phosphate + 5 H(+)(out). Its function is as follows. Produces ATP from ADP in the presence of a proton gradient across the membrane. The catalytic sites are hosted primarily by the beta subunits. This Gracilaria tenuistipitata var. liui (Red alga) protein is ATP synthase subunit beta, chloroplastic.